Consider the following 567-residue polypeptide: Potassium-transporting ATPase potassium-binding subunit (567 aa).

12 helical membrane passes run Gly-5–Gly-25, Thr-64–Leu-84, Gly-136–Ile-156, Leu-179–Pro-199, Ile-254–Phe-274, Trp-285–Ala-305, Val-328–Val-350, Ile-375–Phe-395, Met-421–Leu-441, Ile-459–Thr-481, Ile-486–Ile-506, and Leu-529–Ala-549.

It belongs to the KdpA family. The system is composed of three essential subunits: KdpA, KdpB and KdpC.

Its subcellular location is the cell inner membrane. In terms of biological role, part of the high-affinity ATP-driven potassium transport (or Kdp) system, which catalyzes the hydrolysis of ATP coupled with the electrogenic transport of potassium into the cytoplasm. This subunit binds the periplasmic potassium ions and delivers the ions to the membrane domain of KdpB through an intramembrane tunnel. In Rhizobium rhizogenes (strain K84 / ATCC BAA-868) (Agrobacterium radiobacter), this protein is Potassium-transporting ATPase potassium-binding subunit.